The following is a 628-amino-acid chain: ATP-dependent RNA helicase mrh4, mitochondrial (628 aa).

Residues 1–40 (MSLAVRPPVCLLCRSGAPTLLPSSVSQVARSMATARLRRK) constitute a mitochondrion transit peptide. Positions 51–109 (AKSSINQKRSGKAKFGPWSGMNQTEAHIRGEPRSRSQAALRRSGEKAADTPRKSDSPLY) are disordered. Residues 92–105 (RSGEKAADTPRKSD) are compositionally biased toward basic and acidic residues. The Q motif motif lies at 137–170 (TSFDHFPLLPVVRHSIFSQALPGLVDVTPTPIQR). A Helicase ATP-binding domain is found at 190–402 (EDGDPQYDQY…RKRYPDIKRL (213 aa)). Residue 203 to 210 (AETGSGKT) coordinates ATP. Residues 228–253 (DKENERKEEERKAKEKEERLKNRAFD) are compositionally biased toward basic and acidic residues. The disordered stretch occupies residues 228-260 (DKENERKEEERKAKEKEERLKNRAFDLEPEEPP). Residues 349 to 352 (DEAD) carry the DEAD box motif. A Helicase C-terminal domain is found at 456-628 (YVGPNIKKIL…EGMFRGQALI (173 aa)).

Belongs to the DEAD box helicase family. MRH4 subfamily.

The protein resides in the mitochondrion. It catalyses the reaction ATP + H2O = ADP + phosphate + H(+). ATP-binding RNA helicase involved in mitochondrial RNA metabolism. Required for maintenance of mitochondrial DNA. The protein is ATP-dependent RNA helicase mrh4, mitochondrial (mrh4) of Aspergillus oryzae (strain ATCC 42149 / RIB 40) (Yellow koji mold).